Consider the following 409-residue polypeptide: Putative kinase Y4dM (409 aa).

The active-site Proton acceptor is Asp293.

The protein belongs to the HipA Ser/Thr kinase family.

The polypeptide is Putative kinase Y4dM (Sinorhizobium fredii (strain NBRC 101917 / NGR234)).